The following is a 71-amino-acid chain: Small ribosomal subunit protein eS17 (71 aa).

It belongs to the eukaryotic ribosomal protein eS17 family.

In Pyrobaculum aerophilum (strain ATCC 51768 / DSM 7523 / JCM 9630 / CIP 104966 / NBRC 100827 / IM2), this protein is Small ribosomal subunit protein eS17.